The following is a 415-amino-acid chain: Gamma-glutamyl phosphate reductase (415 aa).

It belongs to the gamma-glutamyl phosphate reductase family.

The protein resides in the cytoplasm. It carries out the reaction L-glutamate 5-semialdehyde + phosphate + NADP(+) = L-glutamyl 5-phosphate + NADPH + H(+). It participates in amino-acid biosynthesis; L-proline biosynthesis; L-glutamate 5-semialdehyde from L-glutamate: step 2/2. Catalyzes the NADPH-dependent reduction of L-glutamate 5-phosphate into L-glutamate 5-semialdehyde and phosphate. The product spontaneously undergoes cyclization to form 1-pyrroline-5-carboxylate. The polypeptide is Gamma-glutamyl phosphate reductase (Carboxydothermus hydrogenoformans (strain ATCC BAA-161 / DSM 6008 / Z-2901)).